Consider the following 508-residue polypeptide: Photosystem II CP47 reaction center protein (508 aa).

The next 6 helical transmembrane spans lie at 21–36, 101–115, 140–156, 203–218, 237–252, and 457–472; these read SVHI…WAGS, IVFS…IWHW, GIHL…FGAF, IAAG…FHLS, VLSS…AFVV, and SFAL…HGAR.

Belongs to the PsbB/PsbC family. PsbB subfamily. PSII is composed of 1 copy each of membrane proteins PsbA, PsbB, PsbC, PsbD, PsbE, PsbF, PsbH, PsbI, PsbJ, PsbK, PsbL, PsbM, PsbT, PsbX, PsbY, PsbZ, Psb30/Ycf12, at least 3 peripheral proteins of the oxygen-evolving complex and a large number of cofactors. It forms dimeric complexes. It depends on Binds multiple chlorophylls. PSII binds additional chlorophylls, carotenoids and specific lipids. as a cofactor.

The protein localises to the plastid. Its subcellular location is the chloroplast thylakoid membrane. Its function is as follows. One of the components of the core complex of photosystem II (PSII). It binds chlorophyll and helps catalyze the primary light-induced photochemical processes of PSII. PSII is a light-driven water:plastoquinone oxidoreductase, using light energy to abstract electrons from H(2)O, generating O(2) and a proton gradient subsequently used for ATP formation. The polypeptide is Photosystem II CP47 reaction center protein (Dioscorea elephantipes (Elephant's foot yam)).